The sequence spans 285 residues: S-methyl-5'-thioadenosine phosphorylase (285 aa).

Residues S10, 52–53, and 85–86 each bind phosphate; these read RH and TA. M188 lines the substrate pocket. Residue T189 coordinates phosphate. A substrate-binding site is contributed by 212 to 214; the sequence is DYD.

Belongs to the PNP/MTAP phosphorylase family. MTAP subfamily. In terms of assembly, homotrimer.

The protein localises to the cytoplasm. It is found in the nucleus. It catalyses the reaction S-methyl-5'-thioadenosine + phosphate = 5-(methylsulfanyl)-alpha-D-ribose 1-phosphate + adenine. It participates in amino-acid biosynthesis; L-methionine biosynthesis via salvage pathway; S-methyl-5-thio-alpha-D-ribose 1-phosphate from S-methyl-5'-thioadenosine (phosphorylase route): step 1/1. Functionally, catalyzes the reversible phosphorylation of S-methyl-5'-thioadenosine (MTA) to adenine and 5-methylthioribose-1-phosphate. Involved in the breakdown of MTA, a major by-product of polyamine biosynthesis. Responsible for the first step in the methionine salvage pathway after MTA has been generated from S-adenosylmethionine. Has broad substrate specificity with 6-aminopurine nucleosides as preferred substrates. The chain is S-methyl-5'-thioadenosine phosphorylase from Caenorhabditis briggsae.